The following is a 180-amino-acid chain: Large ribosomal subunit protein bL17 (180 aa).

Residues 134–180 (AQAKAKKAAAMPTEESEAKPAEEGDVVGASEPDAKAPEEPPTEAPEN) form a disordered region.

This sequence belongs to the bacterial ribosomal protein bL17 family. Part of the 50S ribosomal subunit. Contacts protein L32.

This Mycobacterium tuberculosis (strain CDC 1551 / Oshkosh) protein is Large ribosomal subunit protein bL17.